A 99-amino-acid chain; its full sequence is Ragulator complex protein LAMTOR4 (99 aa).

At Met-1 the chain carries N-acetylmethionine. An N-acetylthreonine; in Ragulator complex protein LAMTOR4, N-terminally processed modification is found at Thr-2. The residue at position 67 (Ser-67) is a Phosphoserine; by PKA.

The protein belongs to the LAMTOR4 family. Part of the Ragulator complex composed of LAMTOR1, LAMTOR2, LAMTOR3, LAMTOR4 and LAMTOR5. LAMTOR4 and LAMTOR5 form a heterodimer that interacts, through LAMTOR1, with a LAMTOR2, LAMTOR3 heterodimer. The Ragulator complex interacts with both the mTORC1 complex and heterodimers constituted of the Rag GTPases RagA/RRAGA, RagB/RRAGB, RagC/RRAGC and RagD/RRAGD; regulated by amino acid availability. The Ragulator complex interacts with SLC38A9; the probable amino acid sensor. Component of the lysosomal folliculin complex (LFC), composed of FLCN, FNIP1 (or FNIP2), RagA/RRAGA or RagB/RRAGB GDP-bound, RagC/RRAGC or RagD/RRAGD GTP-bound, and Ragulator. In terms of processing, phosphorylation at Ser-67 by PKA inhibits Ragulator complex assembly.

It is found in the lysosome. Its function is as follows. As part of the Ragulator complex it is involved in amino acid sensing and activation of mTORC1, a signaling complex promoting cell growth in response to growth factors, energy levels, and amino acids. Activated by amino acids through a mechanism involving the lysosomal V-ATPase, the Ragulator plays a dual role for the small GTPases Rag (RagA/RRAGA, RagB/RRAGB, RagC/RRAGC and/or RagD/RRAGD): it (1) acts as a guanine nucleotide exchange factor (GEF), activating the small GTPases Rag and (2) mediates recruitment of Rag GTPases to the lysosome membrane. Activated Ragulator and Rag GTPases function as a scaffold recruiting mTORC1 to lysosomes where it is in turn activated. The sequence is that of Ragulator complex protein LAMTOR4 from Homo sapiens (Human).